The primary structure comprises 271 residues: Putative pyruvate, phosphate dikinase regulatory protein (271 aa).

151-158 (GISRTSKT) lines the ADP pocket.

The protein belongs to the pyruvate, phosphate/water dikinase regulatory protein family. PDRP subfamily.

The enzyme catalyses N(tele)-phospho-L-histidyl/L-threonyl-[pyruvate, phosphate dikinase] + ADP = N(tele)-phospho-L-histidyl/O-phospho-L-threonyl-[pyruvate, phosphate dikinase] + AMP + H(+). It catalyses the reaction N(tele)-phospho-L-histidyl/O-phospho-L-threonyl-[pyruvate, phosphate dikinase] + phosphate + H(+) = N(tele)-phospho-L-histidyl/L-threonyl-[pyruvate, phosphate dikinase] + diphosphate. Its function is as follows. Bifunctional serine/threonine kinase and phosphorylase involved in the regulation of the pyruvate, phosphate dikinase (PPDK) by catalyzing its phosphorylation/dephosphorylation. In Streptococcus uberis (strain ATCC BAA-854 / 0140J), this protein is Putative pyruvate, phosphate dikinase regulatory protein.